Reading from the N-terminus, the 78-residue chain is Acyl carrier protein (78 aa).

In terms of domain architecture, Carrier spans 2-77 (SDTAERIKKI…DAVSYIDEHK (76 aa)). Ser-37 is modified (O-(pantetheine 4'-phosphoryl)serine).

It belongs to the acyl carrier protein (ACP) family. Post-translationally, 4'-phosphopantetheine is transferred from CoA to a specific serine of apo-ACP by AcpS. This modification is essential for activity because fatty acids are bound in thioester linkage to the sulfhydryl of the prosthetic group.

It is found in the cytoplasm. The protein operates within lipid metabolism; fatty acid biosynthesis. In terms of biological role, carrier of the growing fatty acid chain in fatty acid biosynthesis. The polypeptide is Acyl carrier protein (Zymomonas mobilis subsp. mobilis (strain ATCC 31821 / ZM4 / CP4)).